A 427-amino-acid polypeptide reads, in one-letter code: Inward rectifier potassium channel 2 (427 aa).

Residues 1 to 81 (MGSVRTNRYS…IFTTCVDIRW (81 aa)) lie on the Cytoplasmic side of the membrane. S-nitrosocysteine is present on C76. A helical transmembrane segment spans residues 82-106 (RWMLVIFCLAFVLSWLFFGCVFWLI). Residues 107–128 (ALLHGDLDASKESKACVSEVNS) lie on the Extracellular side of the membrane. An intramembrane region (helical; Pore-forming) is located at residues 129–140 (FTAAFLFSIETQ). Positions 141-147 (TTIGYGF) form an intramembrane region, pore-forming. The Selectivity filter signature appears at 142 to 147 (TIGYGF). The Extracellular segment spans residues 148–156 (RCVTDECPV). A helical membrane pass occupies residues 157–178 (AVFMVVFQSIVGCIIDAFIIGA). Residues 179 to 427 (VMAKMAKPKK…PRPLRRESEI (249 aa)) are Cytoplasmic-facing. The interval 181 to 208 (AKMAKPKKRNETLVFSHNAVIAMRDGKL) is polyphosphoinositide (PIP2)-binding. The segment at 384–427 (SKEEDDSENGVPESTSTDTPPDIDLHNQASVPLEPRPLRRESEI) is disordered. The PDZ-binding motif lies at 425-427 (SEI).

This sequence belongs to the inward rectifier-type potassium channel (TC 1.A.2.1) family. KCNJ2 subfamily. Homotetramer. Homomultimeric and heteromultimeric association with KCNJ4/Kir2.3. Can form heteromeric channels with Kir2.6/KCNJ18. Associates, via its PDZ-recognition domain, with a complex containing LIN7A, LIN7B, LIN7C, DLG1, CASK and APBA1. Post-translationally, S-nitrosylation increases the open probability and inward rectifying currents.

It localises to the cell membrane. Its subcellular location is the sarcolemma. The protein localises to the T-tubule. It carries out the reaction K(+)(in) = K(+)(out). Activated by phosphatidylinositol 4,5 biphosphate (PtdIns(4,5)P2). Its function is as follows. Inward rectifier potassium channels are characterized by a greater tendency to allow potassium to flow into the cell rather than out of it. Their voltage dependence is regulated by the concentration of extracellular potassium; as external potassium is raised, the voltage range of the channel opening shifts to more positive voltages. The inward rectification is mainly due to the blockage of outward current by internal magnesium. Can be blocked by extracellular barium and cesium. Probably participates in establishing action potential waveform and excitability of neuronal and muscle tissues. This Bos taurus (Bovine) protein is Inward rectifier potassium channel 2 (KCNJ2).